We begin with the raw amino-acid sequence, 361 residues long: Holliday junction branch migration complex subunit RuvB (361 aa).

Basic and acidic residues-rich tracts occupy residues 1–13 (MSDVERTEFKLPE) and 33–43 (QGEHDIERSLR). Positions 1 to 43 (MSDVERTEFKLPEGMDLSSPPQRNQDVDAAEQQGEHDIERSLR) are disordered. The interval 2–203 (SDVERTEFKL…FGFTAQMEYY (202 aa)) is large ATPase domain (RuvB-L). ATP contacts are provided by residues Leu42, Arg43, Gly84, Lys87, Thr88, Thr89, 150–152 (EDF), Arg193, Tyr203, and Arg240. Thr88 serves as a coordination point for Mg(2+). The small ATPAse domain (RuvB-S) stretch occupies residues 204 to 274 (DTEDLTRVIS…AAQAALRVFD (71 aa)). The segment at 277–361 (ERGLDRLDRA…PEGAIGGTLF (85 aa)) is head domain (RuvB-H). Residues Arg332 and Arg337 each contribute to the DNA site.

The protein belongs to the RuvB family. In terms of assembly, homohexamer. Forms an RuvA(8)-RuvB(12)-Holliday junction (HJ) complex. HJ DNA is sandwiched between 2 RuvA tetramers; dsDNA enters through RuvA and exits via RuvB. An RuvB hexamer assembles on each DNA strand where it exits the tetramer. Each RuvB hexamer is contacted by two RuvA subunits (via domain III) on 2 adjacent RuvB subunits; this complex drives branch migration. In the full resolvosome a probable DNA-RuvA(4)-RuvB(12)-RuvC(2) complex forms which resolves the HJ.

The protein resides in the cytoplasm. It catalyses the reaction ATP + H2O = ADP + phosphate + H(+). In terms of biological role, the RuvA-RuvB-RuvC complex processes Holliday junction (HJ) DNA during genetic recombination and DNA repair, while the RuvA-RuvB complex plays an important role in the rescue of blocked DNA replication forks via replication fork reversal (RFR). RuvA specifically binds to HJ cruciform DNA, conferring on it an open structure. The RuvB hexamer acts as an ATP-dependent pump, pulling dsDNA into and through the RuvAB complex. RuvB forms 2 homohexamers on either side of HJ DNA bound by 1 or 2 RuvA tetramers; 4 subunits per hexamer contact DNA at a time. Coordinated motions by a converter formed by DNA-disengaged RuvB subunits stimulates ATP hydrolysis and nucleotide exchange. Immobilization of the converter enables RuvB to convert the ATP-contained energy into a lever motion, pulling 2 nucleotides of DNA out of the RuvA tetramer per ATP hydrolyzed, thus driving DNA branch migration. The RuvB motors rotate together with the DNA substrate, which together with the progressing nucleotide cycle form the mechanistic basis for DNA recombination by continuous HJ branch migration. Branch migration allows RuvC to scan DNA until it finds its consensus sequence, where it cleaves and resolves cruciform DNA. The polypeptide is Holliday junction branch migration complex subunit RuvB (Corynebacterium aurimucosum (strain ATCC 700975 / DSM 44827 / CIP 107346 / CN-1) (Corynebacterium nigricans)).